A 229-amino-acid polypeptide reads, in one-letter code: UPF0173 metal-dependent hydrolase SAB1566c (229 aa).

This sequence belongs to the UPF0173 family.

The protein is UPF0173 metal-dependent hydrolase SAB1566c of Staphylococcus aureus (strain bovine RF122 / ET3-1).